Consider the following 205-residue polypeptide: MPMVRIKICGITNTEDARAAAAAGADAVGLVFYRSSPRALDAVRARKILAALPPFVTRVGLFVNAEAADVAATLQQCPLDVLQFHGDESPSLCRGFGRPYIKVLRVTAAQDLRPAVDAYHDAQGLLLDCAAPGVWGGSGRSFDWWRLPDLGKPLILAGGLHAENVAEAIAIARPYAVDVSSGVELSPGRKDHDKMARFVARVRGT.

This sequence belongs to the TrpF family.

The enzyme catalyses N-(5-phospho-beta-D-ribosyl)anthranilate = 1-(2-carboxyphenylamino)-1-deoxy-D-ribulose 5-phosphate. Its pathway is amino-acid biosynthesis; L-tryptophan biosynthesis; L-tryptophan from chorismate: step 3/5. The polypeptide is N-(5'-phosphoribosyl)anthranilate isomerase (Acidithiobacillus ferrooxidans (strain ATCC 23270 / DSM 14882 / CIP 104768 / NCIMB 8455) (Ferrobacillus ferrooxidans (strain ATCC 23270))).